The sequence spans 503 residues: Mitochondrial antiviral-signaling protein (503 aa).

Topologically, residues 1-478 (MTFAEDKTYK…HCASSMPWAK (478 aa)) are cytoplasmic. Residues lysine 7 and lysine 10 each participate in a glycyl lysine isopeptide (Lys-Gly) (interchain with G-Cter in ubiquitin) cross-link. Residues 10 to 77 (KYIRDNHSKF…WVEVFIRALQ (68 aa)) form the CARD domain. Positions 10 to 77 (KYIRDNHSKF…WVEVFIRALQ (68 aa)) are required for interaction with NLRX1. Cysteine 79 carries the S-palmitoyl cysteine lipid modification. Residues 119 to 202 (GPSAFAPGHN…HQEQEPELGG (84 aa)) form a disordered region. Residues 143-147 (PVQDT) are interaction with TRAF2. A compositionally biased stretch (polar residues) spans 145–166 (QDTQPPESPVENSEQLLQTNSG). Serine 152, serine 157, serine 172, serine 186, and serine 220 each carry phosphoserine. Positions 153 to 158 (PVENSE) are interaction with TRAF6 1. Polar residues predominate over residues 178–189 (PSPNQQALSPQP). Asymmetric dimethylarginine is present on arginine 234. Phosphoserine is present on residues serine 251 and serine 256. A Glycyl lysine isopeptide (Lys-Gly) (interchain with G-Cter in ubiquitin) cross-link involves residue lysine 302. Positions 337-503 (PSRVPASVAK…MLYRSRRLAQ (167 aa)) are interaction with DHX33. A disordered region spans residues 346 to 398 (KAPANTIPPERNSKQAKETPEGPATKVTTGGNQTGPNSSIRSLHSGPEMSKPG). Basic and acidic residues predominate over residues 356–365 (RNSKQAKETP). Positions 371-387 (KVTTGGNQTGPNSSIRS) are enriched in polar residues. Serine 384 is modified (phosphoserine). The pLxIS motif motif lies at 415-418 (LAIS). Serine 418 bears the Phosphoserine; by TBK1 mark. The segment at 431 to 436 (PEENEY) is interaction with TRAF6 2. A disordered region spans residues 446–466 (SPSADLLGSPEPLATQQPQEE). Residues 479-496 (WLGATSALLAVFLAVMLY) form a helical membrane-spanning segment. Over 497 to 503 (RSRRLAQ) the chain is Mitochondrial intermembrane.

In terms of assembly, self-associates and polymerizes (via CARD domains) to form 400 nM long three-stranded helical filaments on mitochondria, filament nucleation requires interaction with RIGI whose CARD domains act as a template for filament assembly. Interacts with RIGI, IFIH1/MDA5, TRAF2, TRAF6 and C1QBP. May interact with FADD, RIPK1, IKBKE, CHUK and IKBKB. Interacts (when phosphorylated) with IRF3; following activation and phosphorylation on the pLxIS motif by TBK1, recruits IRF3. Interacts with NLRX1. Interaction with NLRX1 requires the CARD domain. Interacts with PSMA7. Interacts with TRAFD1. Interacts (via C-terminus) with PCBP2 in a complex containing MAVS/IPS1, PCBP2 and ITCH. Interacts with CYLD. Interacts with SRC. Interacts with DHX58/LGP2 and IKBKE. Interacts with STING1. Interacts with IFIT3 (via N-terminus). Interacts with TBK1 only in the presence of IFIT3. Interacts with TTLL12; the interaction prevents MAVS binding to TBK1 and IKBKE. Interacts with MUL1. Interacts with ANKRD17. Interacts with NDFIP1. Interacts with SMURF1; the interaction is mediated by NDFIP1 and leads to MAVS ubiquitination and degradation. Interacts (via C-terminus) with GPATCH3; the interaction is markedly increased upon viral infection. Directly interacts (via CARD domain) with ATG5 and ATG12, either as ATG5 and ATG12 monomers or as ATG12-ATG5 conjugates. Interacts with DHX33 (via the helicase C-terminal domain). Interacts with DDX3X (via C-terminus); this interaction may occur rapidly, but transiently after viral infection. The interaction with DDX3X potentiates MAVS-mediated IFNB induction. Conversely inhibition of this interaction prevents MAVS-mediated IFNB induction. Transiently interacts with TRAF3 early during viral infection. Interacts with CLPB. Interacts with TRAF3IP3. Interacts with TOMM70; the interaction is enhanced by virus infection. Interacts with ZNFX1. Interacts with DHX15. Interacts with N4BP3; this interaction promotes the polyubiquitination of MAVS. Interacts with TAX1BP1; this interaction induces MAVS polyubiquitination. Interacts with NLRP3; promoting NLRP3 recruitment to mitochondria and activation of the NLRP3 inflammasome. Interacts with ECSIT; this interaction bridges RIGI to the MAVS complex at the mitochondrion. Interacts with UBL7; this interaction promotes MAVS 'Lys-27'-linked ubiquitination leading to type I interferon production. Interacts (via transmembrane domain) with SMIM30/MAVI1 (via transmembrane domain); the interaction disrupts MAVS interaction with RIGI and inhibits MAVS aggregation, resulting in the repression of type I interferon signaling and innate immune responses. Following activation, phosphorylated by TBK1 at Ser-418 in the pLxIS motif. The phosphorylated pLxIS motif constitutes an IRF3-binding motif, leading to recruitment of the transcription factor IRF3 to induce type-I interferons and other cytokines. In terms of processing, ubiquitinated. Undergoes 'Lys-48'-linked polyubiquitination catalyzed by ITCH; ITCH-dependent polyubiquitination is mediated by the interaction with PCBP2 and leads to MAVS/IPS1 proteasomal degradation. Ubiquitinated by RNF125, leading to its degradation by the proteasome. Undergoes 'Lys-48'-linked ubiquitination catalyzed by SMURF1. Undergoes 'Lys-48'-linked ubiquitination catalyzed by MARCHF5 at Lys-7, leading to proteasomal degradation. Ubiquitinated via 'Lys-63'-linked ubiquitination at Lys-10 by TRIM31, promoting MAVS polymerization and formation of three-stranded helical filaments on mitochondria. Undergoes 'Lys-63'-linked ubiquitination leading to enhanced interaction between MAVS and TRAF2. Undergoes 'Lys-27'-linked ubiquitination by UBE2N and TRIM21 leading to enhanced interaction between MAVS and TBK1. Deubiquitinated by USP10 leading to attenuation of RIGI-mediated MAVS aggregation and production of type I interferon. Undergoes 'Lys-48'-linked polyubiquitination catalyzed by RNF115 leading to its degradation. Post-translationally, proteolytically cleaved by apoptotic caspases during apoptosis, leading to its inactivation. Cleavage by CASP3 during virus-induced apoptosis inactivates it, preventing cytokine overproduction. Palmitoylated by ZHDDC4. Palmitoylation promotes MAVS stabilization and activation by inhibiting 'Lys-48'- but facilitating 'Lys-63'-linked ubiquitination.

The protein resides in the mitochondrion outer membrane. Its subcellular location is the mitochondrion. The protein localises to the peroxisome. Adapter required for innate immune defense against viruses. Acts downstream of DHX33, RIGI and IFIH1/MDA5, which detect intracellular dsRNA produced during viral replication, to coordinate pathways leading to the activation of NF-kappa-B, IRF3 and IRF7, and to the subsequent induction of antiviral cytokines such as IFN-beta and RANTES (CCL5). Peroxisomal and mitochondrial MAVS act sequentially to create an antiviral cellular state. Upon viral infection, peroxisomal MAVS induces the rapid interferon-independent expression of defense factors that provide short-term protection, whereas mitochondrial MAVS activates an interferon-dependent signaling pathway with delayed kinetics, which amplifies and stabilizes the antiviral response. May activate the same pathways following detection of extracellular dsRNA by TLR3. May protect cells from apoptosis. Involved in NLRP3 inflammasome activation by mediating NLRP3 recruitment to mitochondria. This is Mitochondrial antiviral-signaling protein from Mus musculus (Mouse).